Reading from the N-terminus, the 395-residue chain is Phosphoglycerate kinase (395 aa).

Residues 20 to 22 (DFN), arginine 36, 59 to 62 (HLGR), arginine 120, and arginine 157 contribute to the substrate site. Residues lysine 208, glycine 296, glutamate 327, and 353–356 (GGDT) each bind ATP.

This sequence belongs to the phosphoglycerate kinase family. Monomer.

The protein resides in the cytoplasm. It catalyses the reaction (2R)-3-phosphoglycerate + ATP = (2R)-3-phospho-glyceroyl phosphate + ADP. The protein operates within carbohydrate degradation; glycolysis; pyruvate from D-glyceraldehyde 3-phosphate: step 2/5. The protein is Phosphoglycerate kinase of Tropheryma whipplei (strain Twist) (Whipple's bacillus).